The chain runs to 635 residues: Early transcription factor 70 kDa subunit (635 aa).

One can recognise a Helicase ATP-binding domain in the interval 32–185 (RSIIDENKSV…SNIISLMSDE (154 aa)). 45-52 (HIMGSGKT) is a binding site for ATP. The short motif at 135–138 (DEAH) is the DEXH box element. A Helicase C-terminal domain is found at 326 to 505 (KFKYFITKIE…TLPFDIKKLL (180 aa)).

This sequence belongs to the helicase family. VETF subfamily. Heterodimer of a 70 kDa and a 82 kDa subunit. Part of the early transcription complex composed of ETF, RAP94, and the DNA-directed RNA polymerase.

It is found in the virion. In terms of biological role, acts with RNA polymerase to initiate transcription from early gene promoters. Is recruited by the RPO-associated protein of 94 kDa (RAP94) to form the early transcription complex, which also contains the core RNA polymerase. ETF heterodimer binds to early gene promoters. The polypeptide is Early transcription factor 70 kDa subunit (VETFS) (Oryctolagus cuniculus (Rabbit)).